Reading from the N-terminus, the 469-residue chain is Arginine biosynthesis bifunctional protein ArgJ, chloroplastic (469 aa).

6 residues coordinate substrate: Thr-213, Lys-239, Thr-250, Glu-337, Asn-464, and Thr-469. Thr-250 functions as the Nucleophile in the catalytic mechanism.

It belongs to the ArgJ family. Heterodimer of an alpha and a beta chain.

Its subcellular location is the plastid. The protein resides in the chloroplast. The catalysed reaction is N(2)-acetyl-L-ornithine + L-glutamate = N-acetyl-L-glutamate + L-ornithine. It carries out the reaction L-glutamate + acetyl-CoA = N-acetyl-L-glutamate + CoA + H(+). It participates in amino-acid biosynthesis; L-arginine biosynthesis; L-ornithine and N-acetyl-L-glutamate from L-glutamate and N(2)-acetyl-L-ornithine (cyclic): step 1/1. The protein operates within amino-acid biosynthesis; L-arginine biosynthesis; N(2)-acetyl-L-ornithine from L-glutamate: step 1/4. Its function is as follows. Catalyzes two activities which are involved in the cyclic version of arginine biosynthesis: the synthesis of acetylglutamate from glutamate and acetyl-CoA, and of ornithine by transacetylation between acetylornithine and glutamate. This chain is Arginine biosynthesis bifunctional protein ArgJ, chloroplastic, found in Ricinus communis (Castor bean).